Here is a 216-residue protein sequence, read N- to C-terminus: Glycerol-3-phosphate acyltransferase (216 aa).

A run of 5 helical transmembrane segments spans residues 11 to 31 (LVLG…FGLV), 62 to 82 (LALA…LVAS), 95 to 115 (VLAG…PIWL), 132 to 152 (ATAW…AALF), and 171 to 191 (LVLA…LAWI).

Belongs to the PlsY family. As to quaternary structure, probably interacts with PlsX.

The protein resides in the cell inner membrane. It carries out the reaction an acyl phosphate + sn-glycerol 3-phosphate = a 1-acyl-sn-glycero-3-phosphate + phosphate. It functions in the pathway lipid metabolism; phospholipid metabolism. Its function is as follows. Catalyzes the transfer of an acyl group from acyl-phosphate (acyl-PO(4)) to glycerol-3-phosphate (G3P) to form lysophosphatidic acid (LPA). This enzyme utilizes acyl-phosphate as fatty acyl donor, but not acyl-CoA or acyl-ACP. The sequence is that of Glycerol-3-phosphate acyltransferase from Rhodospirillum rubrum (strain ATCC 11170 / ATH 1.1.1 / DSM 467 / LMG 4362 / NCIMB 8255 / S1).